The primary structure comprises 343 residues: Trans-enoyl reductase ACTTS2 (343 aa).

Position 42–45 (42–45) interacts with NADP(+); the sequence is GDWK. 128-135 serves as a coordination point for substrate; it reads VGITTVGQ. Residues 162–165, 185–188, and Y203 contribute to the NADP(+) site; these read STAT and SPHN. Position 268–272 (268–272) interacts with substrate; sequence GYTAL. 333 to 334 serves as a coordination point for NADP(+); it reads VS.

The protein belongs to the zinc-containing alcohol dehydrogenase family. In terms of assembly, monomer.

It functions in the pathway mycotoxin biosynthesis. Its function is as follows. Trans-enoyl reductase; part of the gene clusters that mediate the biosynthesis of the host-selective toxins (HSTs) ACT-toxins responsible for brown spot of tangerine disease by the tangerine pathotype which affects tangerines and mandarins. ACT-toxins consist of three moieties, 9,10-epoxy-8-hydroxy-9-methyl-decatrienoic acid (EDA), valine and a polyketide. ACT-toxin I is toxic to both citrus and pear; toxin II the 5''-deoxy derivative of ACT-toxin I, is highly toxic to pear and slightly toxic to citrus. On cellular level, ACT-toxins affect plasma membrane of susceptible cells and cause a sudden increase in loss of K(+) after a few minutes of toxin treatment. The acyl-CoA ligase ACTT1, the hydrolase ACTT2, the enoyl-CoA hydratases ACTT3 and ACTT6, and the acyl-CoA synthetase ACTT5 are all involved in the biosynthesis of the AK-, AF- and ACT-toxin common 9,10-epoxy-8-hydroxy-9-methyl-decatrienoic acid (EDA) structural moiety. The exact role of each enzyme, and of additional enzymes identified within the AF-toxin clusters have still to be determined. On the other hand, ACTTS1 to ACTTS4 are specific to the tangerine pathotype. The function of ACTTS3 is to elongate the polyketide chain portion of ACT-toxin that is unique to this toxin. The enoyl-reductase ACTTS2 might complement the missing enoyl-reductase (ER) domain in ACTTS3 in the synthesis of the polyketide portion of ACT-toxin. The roles of the nonribosomal peptide synthetases-related proteins ACTTS1 and ACTTS4 have also still not been elucidated. The sequence is that of Trans-enoyl reductase ACTTS2 from Alternaria alternata (Alternaria rot fungus).